The sequence spans 758 residues: Ribosomal RNA processing protein 1 homolog B (758 aa).

Ser245 carries the phosphoserine modification. Basic residues predominate over residues 259 to 272 (AVSKKKTALGKNHS). The tract at residues 259 to 285 (AVSKKKTALGKNHSRKDGLSDERGRDD) is disordered. Residues 273-285 (RKDGLSDERGRDD) show a composition bias toward basic and acidic residues. Phosphoserine occurs at positions 350, 392, 394, and 395. The interval 381-598 (GSRVFCVEEE…KTASLKKRKK (218 aa)) is disordered. Residues 397–408 (QKRRRKKKKKHH) are compositionally biased toward basic residues. A compositionally biased stretch (low complexity) spans 447 to 457 (GAEATSSTGEE). 2 positions are modified to phosphoserine: Ser452 and Ser458. A compositionally biased stretch (basic residues) spans 469–481 (HNKRKRPRKKSPR). Low complexity predominate over residues 498–513 (SQSGPSGSHPQGPRGS). Ser513 carries the post-translational modification Phosphoserine. Residues 566–575 (QRRRLQKKKA) show a composition bias toward basic residues. Position 579 is a phosphoserine (Ser579). The residue at position 652 (Lys652) is an N6-acetyllysine. Residues 660 to 681 (KSSTATHPPGPAVQLNKTPSSS) are disordered. Ser702 and Ser706 each carry phosphoserine. A disordered region spans residues 707 to 758 (PTGPSRVAFDPEQKPLHGVLKTPTSSPASSPLVAKKPLTTTPRRRPRAMDFF). The residue at position 712 (Arg712) is a Citrulline. Residue Thr728 is modified to Phosphothreonine. A phosphoserine mark is found at Ser732, Ser735, and Ser736.

It belongs to the RRP1 family. As to quaternary structure, interacts with the transcriptional activator E2F1. Interacts with serine/threonine-protein phosphatase PP1 subunits PPP1CB and PPP1CC but not with PPP1CA. Interacts with 60S ribosomal proteins RPL5 and RPL27, ribosomal processing protein RRP1/NNP1 and other nucleolar proteins including NOP2/NOL1 and FBL. Also interacts with nucleolar protein NPM1/B23. Interacts with splicing factor SRSF1 and with LUC7L3/CROP. Interacts with GTPase activator SIPA1. Interacts with CBX5/HP1alpha, H1-10, NCL, PARP1, TRIM28 and YBX3. (Microbial infection) Interacts with influenza A virus nucleoprotein NP and with RNA-directed RNA polymerase subunits PB1 and PB2. In terms of processing, citrullinated by PADI4.

Its subcellular location is the nucleus. The protein localises to the nucleolus. The protein resides in the nucleoplasm. It localises to the chromosome. Its function is as follows. Positively regulates DNA damage-induced apoptosis by acting as a transcriptional coactivator of proapoptotic target genes of the transcriptional activator E2F1. Likely to play a role in ribosome biogenesis by targeting serine/threonine protein phosphatase PP1 to the nucleolus. Involved in regulation of mRNA splicing. Inhibits SIPA1 GTPase activity. Involved in regulating expression of extracellular matrix genes. Associates with chromatin and may play a role in modulating chromatin structure. Functionally, (Microbial infection) Following influenza A virus (IAV) infection, promotes viral mRNA transcription by facilitating the binding of IAV RNA-directed RNA polymerase to capped mRNA. This Homo sapiens (Human) protein is Ribosomal RNA processing protein 1 homolog B (RRP1B).